The sequence spans 356 residues: Holliday junction branch migration complex subunit RuvB (356 aa).

The tract at residues 4–190 is large ATPase domain (RuvB-L); that stretch reads TDKLAAERII…FGIVARLEFY (187 aa). Residues Leu-29, Arg-30, Gly-71, Lys-74, Thr-75, Thr-76, 137 to 139, Arg-180, Tyr-190, and Arg-227 each bind ATP; that span reads EDY. Thr-75 provides a ligand contact to Mg(2+). The tract at residues 191–261 is small ATPAse domain (RuvB-S); that stretch reads DAEQLSRIVR…VADAALAMLD (71 aa). A head domain (RuvB-H) region spans residues 264–356; it reads PVGFDLMDRK…NLWDTPDAEC (93 aa). Residues Arg-300, Arg-319, and Arg-324 each coordinate DNA.

This sequence belongs to the RuvB family. In terms of assembly, homohexamer. Forms an RuvA(8)-RuvB(12)-Holliday junction (HJ) complex. HJ DNA is sandwiched between 2 RuvA tetramers; dsDNA enters through RuvA and exits via RuvB. An RuvB hexamer assembles on each DNA strand where it exits the tetramer. Each RuvB hexamer is contacted by two RuvA subunits (via domain III) on 2 adjacent RuvB subunits; this complex drives branch migration. In the full resolvosome a probable DNA-RuvA(4)-RuvB(12)-RuvC(2) complex forms which resolves the HJ.

The protein resides in the cytoplasm. It catalyses the reaction ATP + H2O = ADP + phosphate + H(+). Functionally, the RuvA-RuvB-RuvC complex processes Holliday junction (HJ) DNA during genetic recombination and DNA repair, while the RuvA-RuvB complex plays an important role in the rescue of blocked DNA replication forks via replication fork reversal (RFR). RuvA specifically binds to HJ cruciform DNA, conferring on it an open structure. The RuvB hexamer acts as an ATP-dependent pump, pulling dsDNA into and through the RuvAB complex. RuvB forms 2 homohexamers on either side of HJ DNA bound by 1 or 2 RuvA tetramers; 4 subunits per hexamer contact DNA at a time. Coordinated motions by a converter formed by DNA-disengaged RuvB subunits stimulates ATP hydrolysis and nucleotide exchange. Immobilization of the converter enables RuvB to convert the ATP-contained energy into a lever motion, pulling 2 nucleotides of DNA out of the RuvA tetramer per ATP hydrolyzed, thus driving DNA branch migration. The RuvB motors rotate together with the DNA substrate, which together with the progressing nucleotide cycle form the mechanistic basis for DNA recombination by continuous HJ branch migration. Branch migration allows RuvC to scan DNA until it finds its consensus sequence, where it cleaves and resolves cruciform DNA. This is Holliday junction branch migration complex subunit RuvB from Burkholderia pseudomallei (strain 668).